A 195-amino-acid polypeptide reads, in one-letter code: Imidazoleglycerol-phosphate dehydratase (195 aa).

This sequence belongs to the imidazoleglycerol-phosphate dehydratase family.

Its subcellular location is the cytoplasm. It carries out the reaction D-erythro-1-(imidazol-4-yl)glycerol 3-phosphate = 3-(imidazol-4-yl)-2-oxopropyl phosphate + H2O. It participates in amino-acid biosynthesis; L-histidine biosynthesis; L-histidine from 5-phospho-alpha-D-ribose 1-diphosphate: step 6/9. This is Imidazoleglycerol-phosphate dehydratase from Maridesulfovibrio salexigens (strain ATCC 14822 / DSM 2638 / NCIMB 8403 / VKM B-1763) (Desulfovibrio salexigens).